Consider the following 435-residue polypeptide: Enolase (435 aa).

Gln-163 contacts (2R)-2-phosphoglycerate. Glu-205 (proton donor) is an active-site residue. Residues Asp-243, Glu-292, and Asp-319 each coordinate Mg(2+). (2R)-2-phosphoglycerate is bound by residues Lys-344, Arg-373, Ser-374, and Lys-395. Lys-344 functions as the Proton acceptor in the catalytic mechanism.

Belongs to the enolase family. Mg(2+) serves as cofactor.

Its subcellular location is the cytoplasm. The protein localises to the secreted. The protein resides in the cell surface. The catalysed reaction is (2R)-2-phosphoglycerate = phosphoenolpyruvate + H2O. Its pathway is carbohydrate degradation; glycolysis; pyruvate from D-glyceraldehyde 3-phosphate: step 4/5. Its function is as follows. Catalyzes the reversible conversion of 2-phosphoglycerate (2-PG) into phosphoenolpyruvate (PEP). It is essential for the degradation of carbohydrates via glycolysis. The chain is Enolase from Streptococcus suis (strain 98HAH33).